Here is a 158-residue protein sequence, read N- to C-terminus: Small ribosomal subunit protein bS16 (158 aa).

A compositionally biased stretch (low complexity) spans Ala-111–Lys-121. A disordered region spans residues Ala-111 to Gly-158. Basic and acidic residues predominate over residues Pro-127–Glu-148.

This sequence belongs to the bacterial ribosomal protein bS16 family.

This chain is Small ribosomal subunit protein bS16, found in Salinispora arenicola (strain CNS-205).